Reading from the N-terminus, the 144-residue chain is 3-hydroxyacyl-[acyl-carrier-protein] dehydratase FabZ (144 aa).

Residue H51 is part of the active site.

It belongs to the thioester dehydratase family. FabZ subfamily.

It is found in the cytoplasm. It carries out the reaction a (3R)-hydroxyacyl-[ACP] = a (2E)-enoyl-[ACP] + H2O. In terms of biological role, involved in unsaturated fatty acids biosynthesis. Catalyzes the dehydration of short chain beta-hydroxyacyl-ACPs and long chain saturated and unsaturated beta-hydroxyacyl-ACPs. The polypeptide is 3-hydroxyacyl-[acyl-carrier-protein] dehydratase FabZ (Clostridium botulinum (strain Loch Maree / Type A3)).